Reading from the N-terminus, the 64-residue chain is MPKLKTRKAALKRYKKTATGKFLRRHAYKGHLLMKKSKTQKRKLSQIICVSNNDSKPIKLMLPY.

It belongs to the bacterial ribosomal protein bL35 family.

Its subcellular location is the plastid. It is found in the chloroplast. The chain is Large ribosomal subunit protein bL35c from Trieres chinensis (Marine centric diatom).